The sequence spans 87 residues: Toxin Cll5b (87 aa).

The N-terminal stretch at 1-19 (MNSLLMITACLAEIGTVWA) is a signal peptide. Residues 20-85 (KEGYLVNKST…TYPLPNKSCS (66 aa)) form the LCN-type CS-alpha/beta domain. 4 cysteine pairs are disulfide-bonded: cysteine 31-cysteine 84, cysteine 35-cysteine 60, cysteine 44-cysteine 65, and cysteine 48-cysteine 67. Positions 86-87 (KK) are cleaved as a propeptide — removed by a carboxypeptidase.

The protein belongs to the long (4 C-C) scorpion toxin superfamily. Sodium channel inhibitor family. Beta subfamily. As to expression, expressed by the venom gland.

The protein localises to the secreted. Its function is as follows. Beta toxins bind voltage-independently at site-4 of sodium channels (Nav) and shift the voltage of activation toward more negative potentials thereby affecting sodium channel activation and promoting spontaneous and repetitive firing. The sequence is that of Toxin Cll5b from Centruroides limpidus (Mexican scorpion).